Reading from the N-terminus, the 167-residue chain is Small ribosomal subunit protein uS5 (167 aa).

The S5 DRBM domain occupies leucine 12–isoleucine 75.

This sequence belongs to the universal ribosomal protein uS5 family. Part of the 30S ribosomal subunit. Contacts proteins S4 and S8.

Its function is as follows. With S4 and S12 plays an important role in translational accuracy. Located at the back of the 30S subunit body where it stabilizes the conformation of the head with respect to the body. This is Small ribosomal subunit protein uS5 from Vibrio vulnificus (strain CMCP6).